Consider the following 342-residue polypeptide: Glycerol-1-phosphate dehydrogenase [NAD(P)+] (342 aa).

Residues 84–88 (GRPID) and 106–109 (TSAS) each bind NAD(+). Asp-111 provides a ligand contact to substrate. Ser-115 contributes to the NAD(+) binding site. Position 160 (Asp-160) interacts with substrate. Asp-160 and His-241 together coordinate Zn(2+). His-245 contributes to the substrate binding site. His-260 provides a ligand contact to Zn(2+).

It belongs to the glycerol-1-phosphate dehydrogenase family. As to quaternary structure, homodimer. The cofactor is Zn(2+).

The protein localises to the cytoplasm. The enzyme catalyses sn-glycerol 1-phosphate + NAD(+) = dihydroxyacetone phosphate + NADH + H(+). It carries out the reaction sn-glycerol 1-phosphate + NADP(+) = dihydroxyacetone phosphate + NADPH + H(+). The protein operates within membrane lipid metabolism; glycerophospholipid metabolism. Catalyzes the NAD(P)H-dependent reduction of dihydroxyacetonephosphate (DHAP or glycerone phosphate) to glycerol 1-phosphate (G1P). The G1P thus generated is used as the glycerophosphate backbone of phospholipids in the cellular membranes of Archaea. This Pyrobaculum islandicum (strain DSM 4184 / JCM 9189 / GEO3) protein is Glycerol-1-phosphate dehydrogenase [NAD(P)+].